The sequence spans 673 residues: UvrABC system protein B (673 aa).

The region spanning 26 to 414 (ANFEAGLAKQ…AGEITELVVR (389 aa)) is the Helicase ATP-binding domain. 39 to 46 (GVTGSGKT) contributes to the ATP binding site. The Beta-hairpin signature appears at 92–115 (YYDYYQPEAYVPSSDTFIEKDSSI). The 167-residue stretch at 431-597 (QVDDLMSEVH…SVARPISDIM (167 aa)) folds into the Helicase C-terminal domain. The tract at residues 601–626 (REDAAEKKAGKGRSKSRQVAEEPADY) is disordered. Residues 635 to 670 (AGKLKALEQKMYQHAKDLEFEAAAQIRDQILKLKAA) enclose the UVR domain.

Belongs to the UvrB family. As to quaternary structure, forms a heterotetramer with UvrA during the search for lesions. Interacts with UvrC in an incision complex.

Its subcellular location is the cytoplasm. Functionally, the UvrABC repair system catalyzes the recognition and processing of DNA lesions. A damage recognition complex composed of 2 UvrA and 2 UvrB subunits scans DNA for abnormalities. Upon binding of the UvrA(2)B(2) complex to a putative damaged site, the DNA wraps around one UvrB monomer. DNA wrap is dependent on ATP binding by UvrB and probably causes local melting of the DNA helix, facilitating insertion of UvrB beta-hairpin between the DNA strands. Then UvrB probes one DNA strand for the presence of a lesion. If a lesion is found the UvrA subunits dissociate and the UvrB-DNA preincision complex is formed. This complex is subsequently bound by UvrC and the second UvrB is released. If no lesion is found, the DNA wraps around the other UvrB subunit that will check the other stand for damage. The polypeptide is UvrABC system protein B (Xanthomonas campestris pv. campestris (strain 8004)).